Consider the following 388-residue polypeptide: MNIHEYQGKEIFRSMGVAVPEGRVAFTAEEAVEKAKELNSDVYVVKAQIHAGGRGKAGGVKIAKSLSEVETYAKELLGKTLVTHQTGPEGKEIKRLYIEEGCAIQKEYYVGFVIDRATDQVTLMASEEGGTEIEEVAAKTPEKIFKETIDPVIGLSPFQARRIAFNINIPKESVNKAAKFLLALYNVFIEKDCSIVEINPLVTTADGDVLALDAKINFDDNALFRHKDVVELRDLEEEDPKEIEASKHDLSYIALDGDIGCMVNGAGLAMATMDTINHFGGNPANFLDAGGSATREKVTEAFKIILGDENVKGIFVNIFGGIMKCDVIAEGIVEAVKEVDLTLPLVVRLEGTNVELGKKILKDSGLAIEPAATMAEGAQKIVKLVKEA.

One can recognise an ATP-grasp domain in the interval 9–244 (KEIFRSMGVA…LEEEDPKEIE (236 aa)). ATP-binding positions include Lys-46, 53-55 (GRG), Glu-99, Cys-102, and Glu-107. Mg(2+) contacts are provided by Asn-199 and Asp-213. Substrate is bound by residues Asn-264 and 321–323 (GIM).

The protein belongs to the succinate/malate CoA ligase beta subunit family. As to quaternary structure, heterotetramer of two alpha and two beta subunits. It depends on Mg(2+) as a cofactor.

It carries out the reaction succinate + ATP + CoA = succinyl-CoA + ADP + phosphate. It catalyses the reaction GTP + succinate + CoA = succinyl-CoA + GDP + phosphate. It participates in carbohydrate metabolism; tricarboxylic acid cycle; succinate from succinyl-CoA (ligase route): step 1/1. In terms of biological role, succinyl-CoA synthetase functions in the citric acid cycle (TCA), coupling the hydrolysis of succinyl-CoA to the synthesis of either ATP or GTP and thus represents the only step of substrate-level phosphorylation in the TCA. The beta subunit provides nucleotide specificity of the enzyme and binds the substrate succinate, while the binding sites for coenzyme A and phosphate are found in the alpha subunit. This is Succinate--CoA ligase [ADP-forming] subunit beta from Staphylococcus aureus (strain Mu3 / ATCC 700698).